The following is a 126-amino-acid chain: Small ribosomal subunit protein uS13 (126 aa).

Residues P98–K126 are disordered. Over residues A108 to K126 the composition is skewed to basic residues.

Belongs to the universal ribosomal protein uS13 family. Part of the 30S ribosomal subunit. Forms a loose heterodimer with protein S19. Forms two bridges to the 50S subunit in the 70S ribosome.

Its function is as follows. Located at the top of the head of the 30S subunit, it contacts several helices of the 16S rRNA. In the 70S ribosome it contacts the 23S rRNA (bridge B1a) and protein L5 of the 50S subunit (bridge B1b), connecting the 2 subunits; these bridges are implicated in subunit movement. Contacts the tRNAs in the A and P-sites. The sequence is that of Small ribosomal subunit protein uS13 from Parabacteroides distasonis (strain ATCC 8503 / DSM 20701 / CIP 104284 / JCM 5825 / NCTC 11152).